The primary structure comprises 566 residues: Alpha-keto-acid decarboxylase (566 aa).

A thiamine diphosphate-binding site is contributed by E61. The tract at residues 396-478 is thiamine pyrophosphate binding; that stretch reads TSFYGMADHR…VVVNNDGYTV (83 aa). The Mg(2+) site is built by D446, N473, and G475.

It belongs to the TPP enzyme family. A metal cation serves as cofactor. Thiamine diphosphate is required as a cofactor.

In terms of biological role, decarboxylates branched-chain and aromatic alpha-keto acids to aldehydes. In Mycobacterium ulcerans (strain Agy99), this protein is Alpha-keto-acid decarboxylase (kdc).